The sequence spans 142 residues: Autophagy-related protein 31 (142 aa).

Its subcellular location is the cytoplasm. The protein resides in the cytoskeleton. It localises to the preautophagosomal structure. Its function is as follows. Plays a role in starvation-induced autophagy. Involved in mitophagy. Functions with ATG17 and ATG29 at the preautophagosomal structure (PAS) in order to form normal autophagosomes under starvation conditions. May be involved in microtubule function, such as chromosome segregation and karyogamy. The protein is Autophagy-related protein 31 (CIS1) of Eremothecium gossypii (strain ATCC 10895 / CBS 109.51 / FGSC 9923 / NRRL Y-1056) (Yeast).